The sequence spans 318 residues: Homoserine kinase (318 aa).

97-107 provides a ligand contact to ATP; sequence PIGSGLGSSAC.

This sequence belongs to the GHMP kinase family. Homoserine kinase subfamily.

The protein resides in the cytoplasm. It carries out the reaction L-homoserine + ATP = O-phospho-L-homoserine + ADP + H(+). Its pathway is amino-acid biosynthesis; L-threonine biosynthesis; L-threonine from L-aspartate: step 4/5. Its function is as follows. Catalyzes the ATP-dependent phosphorylation of L-homoserine to L-homoserine phosphate. This Photobacterium profundum (strain SS9) protein is Homoserine kinase.